The primary structure comprises 553 residues: MFCFQCQETAKNTGCTVKGMCGKPEETANLQDLLIFVLRGIAIYGEKLKELGQPDRSNDDFVLQGLFATITNANWDDARFEAMISEGLARRDKLRNAFLAVYKAKNGKDFSEPLPEAATWTGDSTAFAEKAKSVGILATENEDVRSLRELLIIGLKGVAAYAEHAAVLGFRKTEIDEFMLEALASTTKDLSVDEMVALVMKAGGMAVTTMALLDEANTTTYGNPEITQVNIGVGKNPGILISGHDLKDMAELLKQTEGTGVDVYTHGEMLPANYYPAFKKYPHFVGNYGGSWWQQNPEFESFNGPILLTTNCLVPLKKENTYLDRLYTTGVVGYEGAKHIADRPAGGAKDFSALIAQAKKCPPPVEIETGSIVGGFAHHQVLALADKVVEAVKSGAIKRFVVMAGCDGRQKSRSYYTEVAENLPKDTVILTAGCAKYRYNKLNLGDIGGIPRVLDAGQCNDSYSLAVIALKLKEVFGLDDINDLPVSYDIAWYEQKAVAVLLALLFLGVKGIRLGPTLPAFLSPNVAKVLVENFNIKPIGTVQDDIAAMMAGK.

Residues C3, C6, C15, and C21 each contribute to the [4Fe-4S] cluster site. Residues H244, E268, C312, C406, C434, C459, E494, and K496 each coordinate hybrid [4Fe-2O-2S] cluster. Cysteine persulfide is present on C406.

The protein belongs to the HCP family. Monomer. [4Fe-4S] cluster is required as a cofactor. Requires hybrid [4Fe-2O-2S] cluster as cofactor.

It is found in the cytoplasm. It catalyses the reaction A + NH4(+) + H2O = hydroxylamine + AH2 + H(+). Catalyzes the reduction of hydroxylamine to form NH(3) and H(2)O. The sequence is that of Hydroxylamine reductase from Nitratidesulfovibrio vulgaris (strain ATCC 29579 / DSM 644 / CCUG 34227 / NCIMB 8303 / VKM B-1760 / Hildenborough) (Desulfovibrio vulgaris).